The primary structure comprises 147 residues: Lysozyme C, intestinal isozyme (147 aa).

A signal peptide spans 1–18 (MKAVLILGLLLLSVTVQG). A C-type lysozyme domain is found at 19–147 (KKFEKCELAR…VSSYIRGCKL (129 aa)). Disulfide bonds link cysteine 24-cysteine 145, cysteine 48-cysteine 133, cysteine 83-cysteine 99, and cysteine 95-cysteine 113. Residues glutamate 53 and aspartate 71 contribute to the active site.

Belongs to the glycosyl hydrolase 22 family.

The catalysed reaction is Hydrolysis of (1-&gt;4)-beta-linkages between N-acetylmuramic acid and N-acetyl-D-glucosamine residues in a peptidoglycan and between N-acetyl-D-glucosamine residues in chitodextrins.. Functionally, lysozymes have primarily a bacteriolytic function; those in tissues and body fluids are associated with the monocyte-macrophage system and enhance the activity of immunoagents. The chain is Lysozyme C, intestinal isozyme from Bos taurus (Bovine).